We begin with the raw amino-acid sequence, 346 residues long: Fe(3+) ions import ATP-binding protein FbpC 1 (346 aa).

The ABC transporter domain occupies 5 to 235; the sequence is LEVDGVDKSF…PIDVPTAEFI (231 aa). 37-44 serves as a coordination point for ATP; sequence GPSGCGKT.

The protein belongs to the ABC transporter superfamily. Fe(3+) ion importer (TC 3.A.1.10) family. The complex is composed of two ATP-binding proteins (FbpC), two transmembrane proteins (FbpB) and a solute-binding protein (FbpA).

The protein resides in the cell membrane. It catalyses the reaction Fe(3+)(out) + ATP + H2O = Fe(3+)(in) + ADP + phosphate + H(+). Its function is as follows. Part of the ABC transporter complex FbpABC involved in Fe(3+) ions import. Responsible for energy coupling to the transport system. The protein is Fe(3+) ions import ATP-binding protein FbpC 1 of Rhodococcus jostii (strain RHA1).